We begin with the raw amino-acid sequence, 225 residues long: Esterase OVCA2 (225 aa).

Residues Ser119, Asp177, and His204 each act as charge relay system in the active site.

It belongs to the LovG family. As to expression, strongly expressed in kidney and liver. Moderately expressed in brain, skin and testis. Weakly expressed in heart, lung, small intestine, spleen, stomach and thymus.

The catalysed reaction is a carboxylic ester + H2O = an alcohol + a carboxylate + H(+). Exhibits ester hydrolase activity with a strong preference for long-chain alkyl ester substrates and high selectivity against a variety of short, branched, and substituted esters. Is able to hydrolyze ester bonds within a wide range of p-nitrophenyl derivatives (C2-C14) in vitro, with a strong preference toward substrates of &gt;8 carbons. In Mus musculus (Mouse), this protein is Esterase OVCA2 (Ovca2).